The chain runs to 279 residues: Putative F-box protein At1g50880 (279 aa).

The F-box domain occupies 19–69 (SSSMSSIPLDVTSKILAKLPAKSVLRARCVSKQWSSISTDPYFISNMFPKQ).

This chain is Putative F-box protein At1g50880, found in Arabidopsis thaliana (Mouse-ear cress).